The following is a 1469-amino-acid chain: ABC transporter G family member 36 (1469 aa).

Met1 carries the post-translational modification N-acetylmethionine. A phosphoserine mark is found at Ser37, Ser38, and Ser40. Thr43 is subject to Phosphothreonine. Residue Ser45 is modified to Phosphoserine. One can recognise an ABC transporter 1 domain in the interval 171–444; that stretch reads LGMIGIQFAK…FESFGFKCPE (274 aa). Residue 204–211 participates in ATP binding; the sequence is GPPSSGKT. In terms of domain architecture, ABC transmembrane type-2 1 spans 522 to 735; the sequence is ELLKSCWDKE…AFNGLVVNEM (214 aa). Helical transmembrane passes span 540–560, 575–595, 621–641, 659–679, 685–705, 713–733, and 772–792; these read FFYV…STLF, LYIG…FAEM, LPTF…WMVV, FLLV…IASV, IANT…GFLL, WWGW…LVVN, and ISVG…TLAL. The disordered stretch occupies residues 806 to 852; it reads PEEENEDADQGKDPMRRSLSTADGNRRGEVAMGRMSRDSAAEASGGA. A phosphoserine mark is found at Ser825, Ser841, and Ser844. Basic and acidic residues predominate over residues 829–845; it reads GNRRGEVAMGRMSRDSA. The ABC transporter 2 domain occupies 867 to 1119; sequence MSFDDVKYFV…KVVEYFESFP (253 aa). 912-919 contacts ATP; sequence GVSGAGKT. The region spanning 1192 to 1406 is the ABC transmembrane type-2 2 domain; it reads GQFKSCLWKQ…TVYGLIVSQY (215 aa). 7 consecutive transmembrane segments (helical) span residues 1216–1236, 1239–1259, 1299–1319, 1326–1346, 1356–1376, 1384–1404, and 1441–1461; these read FIFT…IGGN, NAGD…FVGI, LPYV…MVGF, FFWF…YGMM, VASI…GFFI, WWIW…LIVS, and PVAA…AFCI.

This sequence belongs to the ABC transporter superfamily. ABCG family. PDR (TC 3.A.1.205) subfamily. As to quaternary structure, interacts, in a Ca(2+)-dependent manner, with calmodulins CaM3, CaM7 and several CaM-like proteins (CML8, CML9, CML12/CAL4, CML37 and CML38), as well as with calcium regulated proteins CBL4/SOS3 and KIC. In terms of processing, phosphorylated upon perception of pathogen-associated molecular patterns (PAMPs); phosphorylations at Ser-40 and Ser-45, which likely regulate transport activity, are required for plant defense against pathogens (e.g. Blumeria graminis), but dispensable for recruitment to the host-pathogen interface and penetration sites. Phosphorylation at Ser-841 seems to be required for protein stability. Ubiquitous (at protein level). Higher levels in root hairs, stomata, epidermal cells, and hydathodes. Concentrated at the infection site of infected plants, including papillae and haustoria. Accumulates at the periphery of lateral root cap and root epidermal cells, especially in the outer lateral membrane domain facing the environment.

It localises to the cell membrane. The protein localises to the golgi apparatus. The protein resides in the trans-Golgi network membrane. Its subcellular location is the endoplasmic reticulum membrane. In terms of biological role, together with ABCG37, regulates auxin homeostasis and responses by playing a dual role in coumarin (e.g. esculin) and in the auxin precursor indole 3-butyric acid (IBA) efflux transport, thus influencing cotyledons, roots and root hairs development. Mediates the transport (export into the apoplast) of distinct indole-type metabolites in distinct biological processes; a precursor of 4-O-beta-D-glucosyl-indol-3-yl formamide (4OGlcI3F), a pathogen-inducible tryptophan-derived compound (e.g. upon Blumeria graminis conidiospore inoculation), being a probable substrate in extracellular pathogen defense. Involved in the cellular detoxification of xenobiotics by promoting the excretion of some auxinic herbicides including 4-(2,4-dichlorophenoxy)butyric acid (2,4-DB) and other members of the phenoxyalkanoic acid family but not 2,4-dichlorophenoxyacetic acid (2,4-D). Mediates thymidine exudation in the rhizosphere. May be a transporter of lignin precursors during tracheary element differentiation. Key factor that controls the extent of cell death in the defense response. Necessary for both callose deposition and glucosinolate activation in response to pathogens. As a central component of nonhost resistance (NHR), required for limiting invasion by nonadapted pathogens including powdery mildews (e.g. Blumeria graminis and Erysiphe pisi), root-penetrating pathogenic fungi (e.g. Fusarium oxysporum), Phakopsora pachyrhizi and Colletotrichum gloeosporioides (anthracnose fungi), probably by sensing Ca(2+) via interactions with calmodulins (e.g. CaM7). Confers resistance to cadmium (Cd) and lead (Pb), probably as an efflux pump of Cd2+ or Cd conjugates, and possibly, of chemicals that mediate pathogen resistance. Promotes resistance to abiotic stresses (e.g. drought and salt stress) and favors general growth by preventing sodium accumulation in plants. Required for microbe-associated molecular patterns (MAMPs)- and salicylic acid (SA)-dependent hypersensitive cell death (HR), involving indole glucosinolate breakdown products (e.g. indole-3-acetonitrile), probably in a PEN2 myrosinase-dependent metabolic pathway, triggered by the recognition of effectors from incompatible pathogens including oomycetes and bacteria (e.g. AvrRpm1 and AvrRps4) and benzothiadiazole- (BTH), and leading to an induced protection against pathogens (e.g. Pseudomonas syringae pv. tomato DC3000, Golovinomyces orontii and Hyaloperonospora arabidopsidis). The polypeptide is ABC transporter G family member 36 (Arabidopsis thaliana (Mouse-ear cress)).